We begin with the raw amino-acid sequence, 456 residues long: RuvB-like helicase 1 (456 aa).

An ATP-binding site is contributed by 71 to 78 (GGAGTGKT).

Belongs to the RuvB family. In terms of assembly, may form heterododecamers with RVB2. Component of the SWR1 chromatin remodeling complex, the INO80 chromatin remodeling complex, and of the R2TP complex.

The protein localises to the nucleus. The catalysed reaction is ATP + H2O = ADP + phosphate + H(+). Its function is as follows. DNA helicase which participates in several chromatin remodeling complexes, including the SWR1 and the INO80 complexes. The SWR1 complex mediates the ATP-dependent exchange of histone H2A for the H2A variant HZT1 leading to transcriptional regulation of selected genes by chromatin remodeling. The INO80 complex remodels chromatin by shifting nucleosomes and is involved in DNA repair. Also involved in pre-rRNA processing. The protein is RuvB-like helicase 1 (rvb1) of Schizosaccharomyces pombe (strain 972 / ATCC 24843) (Fission yeast).